A 114-amino-acid chain; its full sequence is Fluoride-specific ion channel FluC 1 (114 aa).

4 consecutive transmembrane segments (helical) span residues 3-23 (IDIK…GALF), 30-50 (IFIV…LNIL), 55-75 (LTLC…MSHL), and 87-107 (FLLN…LGHI). Na(+) contacts are provided by Gly63 and Thr66.

Belongs to the fluoride channel Fluc/FEX (TC 1.A.43) family.

It is found in the cell inner membrane. The enzyme catalyses fluoride(in) = fluoride(out). Na(+) is not transported, but it plays an essential structural role and its presence is essential for fluoride channel function. Its function is as follows. Fluoride-specific ion channel. Important for reducing fluoride concentration in the cell, thus reducing its toxicity. This chain is Fluoride-specific ion channel FluC 1, found in Prochlorococcus marinus (strain NATL2A).